Consider the following 146-residue polypeptide: Ankyrin repeat-containing protein P16F5.05c (146 aa).

4 ANK repeats span residues 1–31 (MDVDDLIYACRAADEELLDEIIEKCPQELSR), 35–64 (NGNSGLHMASANGHIAVVQKIIPYLNKEVI), 70–99 (SGNTAMHWAALNGHAEICKLLLEAGGDPHI), and 103–132 (YEKSPIYEADIRNQQKVMDLFLDFEIAKGS).

It is found in the cytoplasm. The protein localises to the nucleus. The polypeptide is Ankyrin repeat-containing protein P16F5.05c (Schizosaccharomyces pombe (strain 972 / ATCC 24843) (Fission yeast)).